A 356-amino-acid chain; its full sequence is UDP-N-acetylglucosamine--N-acetylmuramyl-(pentapeptide) pyrophosphoryl-undecaprenol N-acetylglucosamine transferase (356 aa).

UDP-N-acetyl-alpha-D-glucosamine contacts are provided by residues 12–14, Asn120, Arg163, Ser187, and Gln286; that span reads SGG.

This sequence belongs to the glycosyltransferase 28 family. MurG subfamily.

It localises to the cell inner membrane. The catalysed reaction is di-trans,octa-cis-undecaprenyl diphospho-N-acetyl-alpha-D-muramoyl-L-alanyl-D-glutamyl-meso-2,6-diaminopimeloyl-D-alanyl-D-alanine + UDP-N-acetyl-alpha-D-glucosamine = di-trans,octa-cis-undecaprenyl diphospho-[N-acetyl-alpha-D-glucosaminyl-(1-&gt;4)]-N-acetyl-alpha-D-muramoyl-L-alanyl-D-glutamyl-meso-2,6-diaminopimeloyl-D-alanyl-D-alanine + UDP + H(+). It functions in the pathway cell wall biogenesis; peptidoglycan biosynthesis. Cell wall formation. Catalyzes the transfer of a GlcNAc subunit on undecaprenyl-pyrophosphoryl-MurNAc-pentapeptide (lipid intermediate I) to form undecaprenyl-pyrophosphoryl-MurNAc-(pentapeptide)GlcNAc (lipid intermediate II). This is UDP-N-acetylglucosamine--N-acetylmuramyl-(pentapeptide) pyrophosphoryl-undecaprenol N-acetylglucosamine transferase from Pelagibacter ubique (strain HTCC1062).